The sequence spans 44 residues: Thymosin beta-4 (44 aa).

Positions 1 to 25 are enriched in basic and acidic residues; sequence MSDKPDMAEIEKFDKSKLKKTETQE. The tract at residues 1 to 44 is disordered; it reads MSDKPDMAEIEKFDKSKLKKTETQEKNPLPSKETIEQEKQAGES. Residue serine 2 is modified to N-acetylserine. Serine 2 is subject to Phosphoserine. Lysine 4 is modified (N6-acetyllysine). Lysine 12 is modified (N6-acetyllysine; alternate). Residue lysine 12 forms a Glycyl lysine isopeptide (Lys-Gly) (interchain with G-Cter in SUMO2); alternate linkage. A Phosphothreonine modification is found at threonine 23. Lysine 26 bears the N6-acetyllysine mark. Serine 31 carries the phosphoserine modification. The residue at position 32 (lysine 32) is an N6-acetyllysine. Positions 33 to 44 are enriched in basic and acidic residues; that stretch reads ETIEQEKQAGES. Threonine 34 is subject to Phosphothreonine. Lysine 39 carries the N6-acetyllysine modification.

The protein belongs to the thymosin beta family. In terms of assembly, identified in a complex composed of ACTA1, COBL, GSN AND TMSB4X. Interacts with SERPINB1. AcSDKP is inactivated by ACE, which removes the dipeptide Lys-Pro from its C-terminus.

The protein resides in the cytoplasm. It localises to the cytoskeleton. Its function is as follows. Plays an important role in the organization of the cytoskeleton. Binds to and sequesters actin monomers (G actin) and therefore inhibits actin polymerization. Potent inhibitor of bone marrow derived stem cell differentiation. Acts by inhibits the entry of hematopoietic pluripotent stem cells into the S-phase. The sequence is that of Thymosin beta-4 (TMSB4) from Bos taurus (Bovine).